The sequence spans 553 residues: Glycerol kinase 3 (553 aa).

Thr-20 contributes to the substrate binding site. Arg-24 is an ATP binding site. Positions 94, 148, and 259 each coordinate substrate. ATP is bound by residues Thr-281, Gly-326, and 427–431 (GMTSN).

The protein belongs to the FGGY kinase family.

It localises to the mitochondrion outer membrane. Its subcellular location is the cytoplasm. It catalyses the reaction glycerol + ATP = sn-glycerol 3-phosphate + ADP + H(+). Its pathway is polyol metabolism; glycerol degradation via glycerol kinase pathway; sn-glycerol 3-phosphate from glycerol: step 1/1. Functionally, may be involved in the regulation of glycerol uptake and metabolism. The protein is Glycerol kinase 3 of Homo sapiens (Human).